The following is a 202-amino-acid chain: Na(+)-translocating NADH-quinone reductase subunit E (202 aa).

Helical transmembrane passes span 11-31 (SVFI…FIAI), 35-55 (VETA…TVPA), 81-101 (FLGF…LEML), 114-134 (GIYL…LFMV), 144-164 (VVYG…LAGI), and 180-200 (LGIA…FSGI).

The protein belongs to the NqrDE/RnfAE family. As to quaternary structure, composed of six subunits; NqrA, NqrB, NqrC, NqrD, NqrE and NqrF.

It is found in the cell inner membrane. The catalysed reaction is a ubiquinone + n Na(+)(in) + NADH + H(+) = a ubiquinol + n Na(+)(out) + NAD(+). Its function is as follows. NQR complex catalyzes the reduction of ubiquinone-1 to ubiquinol by two successive reactions, coupled with the transport of Na(+) ions from the cytoplasm to the periplasm. NqrA to NqrE are probably involved in the second step, the conversion of ubisemiquinone to ubiquinol. The chain is Na(+)-translocating NADH-quinone reductase subunit E from Azotobacter vinelandii (strain DJ / ATCC BAA-1303).